The following is a 547-amino-acid chain: MTKFVFVTGGVVSSLGKGIAAASLAAILESRGLKVTLLKLDPYINVDPGTMSPFQHGEVFVTEDGAETDLDLGHYERFITAKMRKVNNFTTGQIYESVIRKERRGEYLGKTVQVIPHITNEIQDYIHRGAEGFDVALVEIGGTVGDIESLPFLEAARQLSLRAGRNAAAFVHLTLVPYLASAGELKTKPTQHSVQKLREIGISPDALLCRADRQIPDDERAKISLFSNVQEDAVISVWDADTIYKIPQMLHDQGLDRIVCEKLALSPKPADLSMWTKLVHSLENPKDSVTIGMVGKYVDLTESYKSLTEALRHAGIHTESRVNIEYLDSEEIENTGPQCLAKYDAILVPGGFGKRGVEGKIASARFARESKIPYLGICLGMQVALIEYARDVAGLTKANSTEFDADTEQPVVALINEWQNHDGKVERRDANSDLGGTMRLGAQTCAVKPGTLAAEIYGSEVTERHRHRYEANNHYLGRVEDAGLIVSARTPTESLCEIMELPRTVHPWYVGVQYHPEFKSTPRDGHPLFISFIKAALAHKHAGQAKK.

The tract at residues 1–265 is amidoligase domain; it reads MTKFVFVTGG…DRIVCEKLAL (265 aa). Ser13 is a CTP binding site. Ser13 lines the UTP pocket. ATP-binding positions include 14-19 and Asp71; that span reads SLGKGI. The Mg(2+) site is built by Asp71 and Glu139. CTP contacts are provided by residues 146–148, 186–191, and Lys222; these read DIE and KTKPTQ. UTP-binding positions include 186–191 and Lys222; that span reads KTKPTQ. Residues 290–542 form the Glutamine amidotransferase type-1 domain; that stretch reads TIGMVGKYVD…IKAALAHKHA (253 aa). Gly351 is a binding site for L-glutamine. Catalysis depends on Cys378, which acts as the Nucleophile; for glutamine hydrolysis. L-glutamine contacts are provided by residues 379-382, Glu402, and Arg468; that span reads LGMQ. Catalysis depends on residues His515 and Glu517.

This sequence belongs to the CTP synthase family. Homotetramer.

It carries out the reaction UTP + L-glutamine + ATP + H2O = CTP + L-glutamate + ADP + phosphate + 2 H(+). The enzyme catalyses L-glutamine + H2O = L-glutamate + NH4(+). The catalysed reaction is UTP + NH4(+) + ATP = CTP + ADP + phosphate + 2 H(+). Its pathway is pyrimidine metabolism; CTP biosynthesis via de novo pathway; CTP from UDP: step 2/2. Its activity is regulated as follows. Allosterically activated by GTP, when glutamine is the substrate; GTP has no effect on the reaction when ammonia is the substrate. The allosteric effector GTP functions by stabilizing the protein conformation that binds the tetrahedral intermediate(s) formed during glutamine hydrolysis. Inhibited by the product CTP, via allosteric rather than competitive inhibition. Its function is as follows. Catalyzes the ATP-dependent amination of UTP to CTP with either L-glutamine or ammonia as the source of nitrogen. Regulates intracellular CTP levels through interactions with the four ribonucleotide triphosphates. The polypeptide is CTP synthase (Janthinobacterium sp. (strain Marseille) (Minibacterium massiliensis)).